Reading from the N-terminus, the 433-residue chain is Enolase (433 aa).

Gln-167 lines the (2R)-2-phosphoglycerate pocket. Glu-209 (proton donor) is an active-site residue. Asp-246, Glu-291, and Asp-318 together coordinate Mg(2+). The (2R)-2-phosphoglycerate site is built by Lys-343, Arg-372, Ser-373, and Lys-394. Lys-343 functions as the Proton acceptor in the catalytic mechanism.

Belongs to the enolase family. Component of the RNA degradosome, a multiprotein complex involved in RNA processing and mRNA degradation. It depends on Mg(2+) as a cofactor.

It is found in the cytoplasm. The protein resides in the secreted. The protein localises to the cell surface. It catalyses the reaction (2R)-2-phosphoglycerate = phosphoenolpyruvate + H2O. It functions in the pathway carbohydrate degradation; glycolysis; pyruvate from D-glyceraldehyde 3-phosphate: step 4/5. Its function is as follows. Catalyzes the reversible conversion of 2-phosphoglycerate (2-PG) into phosphoenolpyruvate (PEP). It is essential for the degradation of carbohydrates via glycolysis. In Shewanella frigidimarina (strain NCIMB 400), this protein is Enolase.